Reading from the N-terminus, the 116-residue chain is MTNKIIQQLEAEQMSKEIPTFAPGDTVVVQVKVKEGDRSRLQAFEGVVIAKRNRGLNSAFTVRKISSGVGVERTFQTYSPQIDSLAVKRRGDVRKAKLYYLRDLSGKAARIKEKLS.

Belongs to the bacterial ribosomal protein bL19 family.

Its function is as follows. This protein is located at the 30S-50S ribosomal subunit interface and may play a role in the structure and function of the aminoacyl-tRNA binding site. This is Large ribosomal subunit protein bL19 from Pseudomonas entomophila (strain L48).